Consider the following 74-residue polypeptide: Conotoxin SIIID (74 aa).

The N-terminal stretch at 1–20 (MMSKLGVLLTVCLLLFPLTA) is a signal peptide. Residues 21–53 (LPLDGDQPADQLEDRMQDDISSEQYPSFVRRQK) constitute a propeptide that is removed on maturation. Cystine bridges form between Cys54–Cys71, Cys55–Cys73, and Cys61–Cys74.

The protein belongs to the conotoxin M superfamily. Post-translationally, three disulfide isomers have been synthesized and tested. SIIID with the disulfide pairing 1-4;2-5;3-6 is the most active. As to expression, expressed by the venom duct.

Its subcellular location is the secreted. Functionally, the short synthetic peptide SIIID (range 54-74, with disulfide pairing 1-4, 2-5 and 3-6) reversibly inhibits human alpha-7/CHRNA7 acetylcholine receptor (IC(50)=880 nM). Shows a paralytic effect in fish. The polypeptide is Conotoxin SIIID (Conus striatus (Striated cone)).